A 718-amino-acid chain; its full sequence is Glycine--tRNA ligase beta subunit (718 aa).

This sequence belongs to the class-II aminoacyl-tRNA synthetase family. In terms of assembly, tetramer of two alpha and two beta subunits.

Its subcellular location is the cytoplasm. It carries out the reaction tRNA(Gly) + glycine + ATP = glycyl-tRNA(Gly) + AMP + diphosphate. The sequence is that of Glycine--tRNA ligase beta subunit from Mesorhizobium japonicum (strain LMG 29417 / CECT 9101 / MAFF 303099) (Mesorhizobium loti (strain MAFF 303099)).